The primary structure comprises 361 residues: MKDSVIRKLEGLLERNEEVLALLSDPSVIADQERFRALSKEYSQLEDVVKSFTAFQQATEDLEAAKEMLNEDDPELKEMAQEEMKEAKSVLETLEDELQILLLPKDPNDDNNAFIEIRAGAGGDEAAIFAGDLFRMYSKYSESNRWQIEVMNTNEGEHGGFKEVIAKISGEGVYGKLKFESGGHRVQRVPETESQGRVHTSACTVIVLPEIPEAEAIEINKADLKVDTFRASGAGGQHVNKTDSAIRITHIPTGIVVECQDQRSQHKNRAQAMSVLSARIQAVEDEKRRSEEESTRRNLVSSGDRSERIRTYNFPQGRMSDHRINLTLYRLNEVMEGVLDVIIEPLILENQADLLAALAED.

Gln-237 is subject to N5-methylglutamine. Over residues Val-283–Arg-296 the composition is skewed to basic and acidic residues. The disordered stretch occupies residues Val-283–Arg-305.

It belongs to the prokaryotic/mitochondrial release factor family. In terms of processing, methylated by PrmC. Methylation increases the termination efficiency of RF1.

The protein localises to the cytoplasm. Peptide chain release factor 1 directs the termination of translation in response to the peptide chain termination codons UAG and UAA. This Shewanella woodyi (strain ATCC 51908 / MS32) protein is Peptide chain release factor 1.